The following is a 768-amino-acid chain: Glucoamylase S2 (768 aa).

The signal sequence occupies residues 1 to 21; that stretch reads MQRPFLLAYLVLSLLFNSALG. Disordered regions lie at residues 29–83 and 125–149; these read RGSS…ETTI and TTTV…PTTP. The span at 30-48 shows a compositional bias: low complexity; sequence GSSSSNITSSGPSSTPFSS. Asn-35 carries an N-linked (GlcNAc...) asparagine glycan. Polar residues predominate over residues 49–66; the sequence is ATESFSTGTTVTPSSSKY. 2 stretches are compositionally biased toward low complexity: residues 71–83 and 131–149; these read TETS…ETTI and STSP…PTTP. 5 N-linked (GlcNAc...) asparagine glycosylation sites follow: Asn-309, Asn-323, Asn-415, Asn-424, and Asn-435. The h subunit stretch occupies residues 349–692; sequence VSIERIFENI…ASTTLYQLIY (344 aa). Trp-456 serves as a coordination point for substrate. The N-linked (GlcNAc...) asparagine glycan is linked to Asn-514. The active-site Proton acceptor is Asp-519. The active-site Proton donor is Glu-522. N-linked (GlcNAc...) asparagine glycosylation is found at Asn-547, Asn-646, Asn-651, Asn-721, and Asn-742. Residues 693-768 form a y subunit region; sequence RHISEQHDLV…LKATWEQTGN (76 aa).

Belongs to the glycosyl hydrolase 15 family.

It carries out the reaction Hydrolysis of terminal (1-&gt;4)-linked alpha-D-glucose residues successively from non-reducing ends of the chains with release of beta-D-glucose.. The protein is Glucoamylase S2 (STA2) of Saccharomyces cerevisiae (Baker's yeast).